Here is a 180-residue protein sequence, read N- to C-terminus: Inner membrane-spanning protein YciB (180 aa).

Transmembrane regions (helical) follow at residues 4–24 (LLSE…GGGI), 25–45 (QHAT…CYVI), 52–72 (LSII…ISGN), 76–96 (IKIK…MSGI), 118–138 (ITLS…NEVV), and 150–170 (FKVF…LPLL).

This sequence belongs to the YciB family.

It localises to the cell inner membrane. Its function is as follows. Plays a role in cell envelope biogenesis, maintenance of cell envelope integrity and membrane homeostasis. This Rickettsia massiliae (strain Mtu5) protein is Inner membrane-spanning protein YciB.